The following is a 703-amino-acid chain: DNA ligase (703 aa).

Residues Met-1–Ala-20 are disordered. Positions Ser-9–Ala-20 are enriched in low complexity. NAD(+) is bound by residues Asp-53 to Asp-57, Ser-102 to Ile-103, and Glu-139. The active-site N6-AMP-lysine intermediate is Lys-141. Arg-162, Glu-200, Lys-321, and Lys-345 together coordinate NAD(+). Zn(2+) contacts are provided by Cys-439, Cys-442, Cys-457, and Cys-463. One can recognise a BRCT domain in the interval Gln-622–Arg-703.

This sequence belongs to the NAD-dependent DNA ligase family. LigA subfamily. Mg(2+) is required as a cofactor. Requires Mn(2+) as cofactor.

It carries out the reaction NAD(+) + (deoxyribonucleotide)n-3'-hydroxyl + 5'-phospho-(deoxyribonucleotide)m = (deoxyribonucleotide)n+m + AMP + beta-nicotinamide D-nucleotide.. Its function is as follows. DNA ligase that catalyzes the formation of phosphodiester linkages between 5'-phosphoryl and 3'-hydroxyl groups in double-stranded DNA using NAD as a coenzyme and as the energy source for the reaction. It is essential for DNA replication and repair of damaged DNA. The sequence is that of DNA ligase from Delftia acidovorans (strain DSM 14801 / SPH-1).